The sequence spans 708 residues: MKLFFPALLSLGALGLCLAASKKSVRWCTTSPAESSKCAQWQRRMKKVRGPSVTCVKKTSRFECIQAISTEKADAVTLDGGLVYDAGLDPYKLRPIAAEVYGTENNPQTHYYAVAIAKKGTNFQLNQLQGLKSCHTGLGRSAGWNIPMGLLRPFLDWTGPPEPLQKAVAKFFSASCVPCVDGKEYPNLCQLCAGTGENKCACSSQEPYFGYSGAFKCLQDGAGDVAFVKDSTVFESLPAKADRDQYELLCPNNTRKPVDAFQECHLARVPSHAVVARSVNGKEDLIWKLLVKAQEKFGRGKPSGFQLFGSPAGQKDLLFKDSALGLLRISSKIDSGLYLGSNYITAIRGLRETAAEVELRRAQVVWCAVGSDEQLKCQEWSRQSNQSVVCATASTTEDCIALVLKGEADALSLDGGYIYIAGKCGLVPVLAESQQSPESSGLDCVHRPVKGYLAVAVVRKANDKITWNSLRGKKSCHTAVDRTAGWNIPMGLLSKNTDSCRFDEFLSQSCAPGSDPRSKLCALCAGNEEGQNKCVPNSSERYYGYTGAFRCLAENVGDVAFVKDVTVLDNTDGKNTEQWAKDLKLGDFELLCLNGTRKPVTEAESCHLAVAPNHAVVSRIDKVAHLEQVLLRQQAHFGRNGRDCPGKFCLFQSKTKNLLFNDNTECLAKLQGKTTYEEYLGPQYVTAIAKLRRCSTSPLLEACAFLMR.

The first 19 residues, Met1–Ala19, serve as a signal peptide directing secretion. 2 Transferrin-like domains span residues Val25–Glu352 and Val364–Arg693. 2 disulfide bridges follow: Cys28–Cys64 and Cys38–Cys55. The interval Arg44–Pro51 is interaction with E.coli ompC. Asp79 serves as a coordination point for Fe(3+). The active site involves Lys92. Tyr111 contributes to the Fe(3+) binding site. Intrachain disulfides connect Cys134/Cys217, Cys176/Cys192, Cys179/Cys202, Cys189/Cys200, and Cys250/Cys264. Hydrogencarbonate is bound by residues Thr136, Arg140, Ala142, and Gly143. Tyr211 is a Fe(3+) binding site. An N-linked (GlcNAc...) asparagine glycan is attached at Asn252. Position 272 (His272) interacts with Fe(3+). Ser278 acts as the Nucleophile in catalysis. 2 disulfides stabilise this stretch: Cys367-Cys399 and Cys377-Cys390. Asn385 is a glycosylation site (N-linked (GlcNAc...) asparagine). 2 residues coordinate Fe(3+): Asp414 and Tyr452. 8 disulfides stabilise this stretch: Cys424-Cys703, Cys444-Cys666, Cys476-Cys551, Cys500-Cys694, Cys510-Cys524, Cys521-Cys534, Cys592-Cys606, and Cys644-Cys649. Hydrogencarbonate is bound by residues Thr478, Arg482, Ala484, and Gly485. Asn537 is a glycosylation site (N-linked (GlcNAc...) asparagine). Tyr545 provides a ligand contact to Fe(3+). Asn594 is a glycosylation site (N-linked (GlcNAc...) asparagine). His614 provides a ligand contact to Fe(3+).

The protein belongs to the transferrin family. In terms of assembly, monomer. Found in a complex with LTF, CLU, EPPIN and SEMG1. Interacts with E.coli outer membrane protein C (OmpC). Found in a complex with MPO and LTF; interacts directly with CP, allows Fe(3+) incorporation into LTF and activation of CP ferroxidase activity. Poly-N-acetyllactosaminic carbohydrate moiety seems to be needed for TLR4 activation.

Its subcellular location is the secreted. The protein localises to the cytoplasmic granule. Its function is as follows. Transferrins are iron binding transport proteins which can bind two Fe(3+) ions in association with the binding of an anion, usually bicarbonate. Major iron-binding and multifunctional protein found in exocrine fluids such as breast milk and mucosal secretions. Has antimicrobial activity, which depends on the extracellular cation concentration. Antimicrobial properties include bacteriostasis, which is related to its ability to sequester free iron and thus inhibit microbial growth, as well as direct bactericidal properties leading to the release of lipopolysaccharides from the bacterial outer membrane. Can also prevent bacterial biofilm development in P.aeruginosa infection. Has weak antifungal activity against C.albicans. Has anabolic, differentiating and anti-apoptotic effects on osteoblasts and can also inhibit osteoclastogenesis, possibly playing a role in the regulation of bone growth. Promotes binding of species C adenoviruses to epithelial cells, promoting adenovirus infection. Can inhibit papillomavirus infections. Stimulates the TLR4 signaling pathway leading to NF-kappa-B activation and subsequent pro-inflammatory cytokine production while also interfering with the lipopolysaccharide (LPS)-stimulated TLR4 signaling. Inhibits neutrophil granulocyte migration to sites of apoptosis, when secreted by apoptotic cells. Stimulates VEGFA-mediated endothelial cell migration and proliferation. Binds heparin, chondroitin sulfate and possibly other glycosaminoglycans (GAGs). Also binds specifically to pneumococcal surface protein A (PspA), the lipid A portion of bacterial lipopolysaccharide (LPS), lysozyme and DNA. In terms of biological role, lactoferricin binds to the bacterial surface and is crucial for the bactericidal functions. Has some antiviral activity against papillomavirus infection. N-terminal region shows strong antifungal activity against C.albicans. Contains two BBXB heparin-binding consensus sequences that appear to form the predominate functional GAG-binding site. Functionally, the lactotransferrin transferrin-like domain 1 functions as a serine protease of the peptidase S60 family that cuts arginine rich regions. This function contributes to the antimicrobial activity. Shows a preferential cleavage at -Arg-Ser-Arg-Arg-|- and -Arg-Arg-Ser-Arg-|-, and of Z-Phe-Arg-|-aminomethylcoumarin sites. This Camelus dromedarius (Dromedary) protein is Lactotransferrin (LTF).